Reading from the N-terminus, the 150-residue chain is SsrA-binding protein (150 aa).

Belongs to the SmpB family.

The protein localises to the cytoplasm. Functionally, required for rescue of stalled ribosomes mediated by trans-translation. Binds to transfer-messenger RNA (tmRNA), required for stable association of tmRNA with ribosomes. tmRNA and SmpB together mimic tRNA shape, replacing the anticodon stem-loop with SmpB. tmRNA is encoded by the ssrA gene; the 2 termini fold to resemble tRNA(Ala) and it encodes a 'tag peptide', a short internal open reading frame. During trans-translation Ala-aminoacylated tmRNA acts like a tRNA, entering the A-site of stalled ribosomes, displacing the stalled mRNA. The ribosome then switches to translate the ORF on the tmRNA; the nascent peptide is terminated with the 'tag peptide' encoded by the tmRNA and targeted for degradation. The ribosome is freed to recommence translation, which seems to be the essential function of trans-translation. This is SsrA-binding protein from Nitratiruptor sp. (strain SB155-2).